Here is a 419-residue protein sequence, read N- to C-terminus: Serine hydroxymethyltransferase (419 aa).

(6S)-5,6,7,8-tetrahydrofolate is bound by residues L121 and 125–127 (GHL). The residue at position 230 (K230) is an N6-(pyridoxal phosphate)lysine. 355-357 (SPF) serves as a coordination point for (6S)-5,6,7,8-tetrahydrofolate.

It belongs to the SHMT family. Homodimer. Pyridoxal 5'-phosphate serves as cofactor.

The protein localises to the cytoplasm. The catalysed reaction is (6R)-5,10-methylene-5,6,7,8-tetrahydrofolate + glycine + H2O = (6S)-5,6,7,8-tetrahydrofolate + L-serine. Its pathway is one-carbon metabolism; tetrahydrofolate interconversion. The protein operates within amino-acid biosynthesis; glycine biosynthesis; glycine from L-serine: step 1/1. Functionally, catalyzes the reversible interconversion of serine and glycine with tetrahydrofolate (THF) serving as the one-carbon carrier. This reaction serves as the major source of one-carbon groups required for the biosynthesis of purines, thymidylate, methionine, and other important biomolecules. Also exhibits THF-independent aldolase activity toward beta-hydroxyamino acids, producing glycine and aldehydes, via a retro-aldol mechanism. This Streptococcus uberis (strain ATCC BAA-854 / 0140J) protein is Serine hydroxymethyltransferase.